The chain runs to 208 residues: Protein IncB (208 aa).

Its function is as follows. This protein is thought to be cis acting and to contain the putative attachment site on the DNA for the cellular partition apparatus. The sequence is that of Protein IncB (incB) from Escherichia coli.